We begin with the raw amino-acid sequence, 419 residues long: Serine hydroxymethyltransferase (419 aa).

(6S)-5,6,7,8-tetrahydrofolate contacts are provided by residues L121 and 125–127 (GHL). K229 is modified (N6-(pyridoxal phosphate)lysine). Position 354 to 356 (354 to 356 (SPF)) interacts with (6S)-5,6,7,8-tetrahydrofolate.

This sequence belongs to the SHMT family. In terms of assembly, homodimer. Pyridoxal 5'-phosphate is required as a cofactor.

It is found in the cytoplasm. The catalysed reaction is (6R)-5,10-methylene-5,6,7,8-tetrahydrofolate + glycine + H2O = (6S)-5,6,7,8-tetrahydrofolate + L-serine. The protein operates within one-carbon metabolism; tetrahydrofolate interconversion. It participates in amino-acid biosynthesis; glycine biosynthesis; glycine from L-serine: step 1/1. Its function is as follows. Catalyzes the reversible interconversion of serine and glycine with tetrahydrofolate (THF) serving as the one-carbon carrier. This reaction serves as the major source of one-carbon groups required for the biosynthesis of purines, thymidylate, methionine, and other important biomolecules. Also exhibits THF-independent aldolase activity toward beta-hydroxyamino acids, producing glycine and aldehydes, via a retro-aldol mechanism. The protein is Serine hydroxymethyltransferase of Coxiella burnetii (strain CbuG_Q212) (Coxiella burnetii (strain Q212)).